Reading from the N-terminus, the 203-residue chain is MSIKYVATSKLPTPWGVFAMHGFEDTETGKEHVALTFGSLSSDEPVLGRIHSECLTGDALFSLRCDCGFQLQTAMQNIAETGSGFILYLRQEGRGIGLLNKIRAYELQDKGANTVEANEQLGFPADMRKYDMIQPMLEKIGVKHVRLMTNNPRKVKAMKEIGIEVVERVPLQVGKNRYNEAYLKTKSTELGHMMSEYHFTDEE.

Arginine 49–glutamate 53 lines the GTP pocket. Residues cysteine 54, cysteine 65, and cysteine 67 each contribute to the Zn(2+) site. GTP-binding positions include glutamine 70, glutamate 92–arginine 94, and threonine 114. Residue aspartate 126 is the Proton acceptor of the active site. Arginine 128 (nucleophile) is an active-site residue. The GTP site is built by threonine 149 and lysine 154.

The protein belongs to the GTP cyclohydrolase II family. Requires Zn(2+) as cofactor.

It carries out the reaction GTP + 4 H2O = 2,5-diamino-6-hydroxy-4-(5-phosphoribosylamino)-pyrimidine + formate + 2 phosphate + 3 H(+). The protein operates within cofactor biosynthesis; riboflavin biosynthesis; 5-amino-6-(D-ribitylamino)uracil from GTP: step 1/4. Catalyzes the conversion of GTP to 2,5-diamino-6-ribosylamino-4(3H)-pyrimidinone 5'-phosphate (DARP), formate and pyrophosphate. This Shewanella oneidensis (strain ATCC 700550 / JCM 31522 / CIP 106686 / LMG 19005 / NCIMB 14063 / MR-1) protein is GTP cyclohydrolase-2.